A 517-amino-acid polypeptide reads, in one-letter code: Aldehyde dehydrogenase X, mitochondrial (517 aa).

The N-terminal 17 residues, 1 to 17 (MLRFLAPRLLSLQGRTA), are a transit peptide targeting the mitochondrion. N6-acetyllysine is present on Lys51. The residue at position 52 (Lys52) is an N6-acetyllysine; alternate. An N6-succinyllysine; alternate modification is found at Lys52. Position 81 is an N6-succinyllysine (Lys81). 262 to 267 (GSTEVG) is a binding site for NAD(+). Glu285 functions as the Proton acceptor in the catalytic mechanism. The active-site Nucleophile is Cys319. Residues Lys364, Lys383, Lys399, Lys414, and Lys426 each carry the N6-acetyllysine; alternate modification. Lys364, Lys383, Lys399, Lys414, and Lys426 each carry N6-succinyllysine; alternate. Lys429 is modified (N6-acetyllysine).

Belongs to the aldehyde dehydrogenase family. In terms of assembly, homotetramer.

It is found in the mitochondrion matrix. The catalysed reaction is an aldehyde + NAD(+) + H2O = a carboxylate + NADH + 2 H(+). It participates in alcohol metabolism; ethanol degradation; acetate from ethanol: step 2/2. Functionally, ALDHs play a major role in the detoxification of alcohol-derived acetaldehyde. They are involved in the metabolism of corticosteroids, biogenic amines, neurotransmitters, and lipid peroxidation. This is Aldehyde dehydrogenase X, mitochondrial (ALDH1B1) from Pongo abelii (Sumatran orangutan).